The primary structure comprises 91 residues: Small ribosomal subunit protein bS6 (91 aa).

This sequence belongs to the bacterial ribosomal protein bS6 family.

Its function is as follows. Binds together with bS18 to 16S ribosomal RNA. The chain is Small ribosomal subunit protein bS6 from Leptospira borgpetersenii serovar Hardjo-bovis (strain JB197).